Reading from the N-terminus, the 308-residue chain is HTH-type transcriptional activator AllS (308 aa).

One can recognise an HTH lysR-type domain in the interval 2–59; it reads FDPETLRTFISVAETGSFSKAAERLCKTTATTSYRIKLLEENTGVGLFFRTTRSVSLT. The H-T-H motif DNA-binding region spans 19–38; that stretch reads FSKAAERLCKTTATTSYRIK.

This sequence belongs to the LysR transcriptional regulatory family.

In terms of biological role, positive regulator essential for the expression of allD operon. Binds to the allD promoter. In Salmonella typhi, this protein is HTH-type transcriptional activator AllS (allS).